Here is a 201-residue protein sequence, read N- to C-terminus: Recombination protein RecR (201 aa).

The C4-type zinc-finger motif lies at 57 to 74 (CRICGFITSKDDDPCVIC). The region spanning 82–178 (SKIFVVENSQ…KVTRLARGLS (97 aa)) is the Toprim domain.

The protein belongs to the RecR family.

Its function is as follows. May play a role in DNA repair. It seems to be involved in an RecBC-independent recombinational process of DNA repair. It may act with RecF and RecO. This chain is Recombination protein RecR, found in Oenococcus oeni (strain ATCC BAA-331 / PSU-1).